The chain runs to 160 residues: Protein-export protein SecB (160 aa).

The protein belongs to the SecB family. In terms of assembly, homotetramer, a dimer of dimers. One homotetramer interacts with 1 SecA dimer.

The protein resides in the cytoplasm. Functionally, one of the proteins required for the normal export of preproteins out of the cell cytoplasm. It is a molecular chaperone that binds to a subset of precursor proteins, maintaining them in a translocation-competent state. It also specifically binds to its receptor SecA. The protein is Protein-export protein SecB of Orientia tsutsugamushi (strain Boryong) (Rickettsia tsutsugamushi).